The following is a 263-amino-acid chain: Shikimate dehydrogenase (NADP(+)) (263 aa).

Shikimate-binding positions include 16–18 (SKS) and threonine 65. The active-site Proton acceptor is the lysine 69. Shikimate is bound by residues asparagine 90 and aspartate 105. Residues 125–129 (GAGGS), serine 181, and leucine 208 each bind NADP(+). A shikimate-binding site is contributed by tyrosine 210. Residue glycine 230 participates in NADP(+) binding. Glutamine 237 lines the shikimate pocket.

The protein belongs to the shikimate dehydrogenase family. As to quaternary structure, homodimer.

The catalysed reaction is shikimate + NADP(+) = 3-dehydroshikimate + NADPH + H(+). It participates in metabolic intermediate biosynthesis; chorismate biosynthesis; chorismate from D-erythrose 4-phosphate and phosphoenolpyruvate: step 4/7. Its function is as follows. Involved in the biosynthesis of the chorismate, which leads to the biosynthesis of aromatic amino acids. Catalyzes the reversible NADPH linked reduction of 3-dehydroshikimate (DHSA) to yield shikimate (SA). This chain is Shikimate dehydrogenase (NADP(+)), found in Helicobacter pylori (strain ATCC 700392 / 26695) (Campylobacter pylori).